Reading from the N-terminus, the 298-residue chain is Triosephosphate isomerase, chloroplastic (298 aa).

Residues 1–18 show a composition bias toward pro residues; sequence MAARRPSPPPASPPPPRP. The disordered stretch occupies residues 1 to 32; that stretch reads MAARRPSPPPASPPPPRPRSTTTTRTTSSASA. The N-terminal 43 residues, 1 to 43, are a transit peptide targeting the chloroplast; the sequence is MAARRPSPPPASPPPPRPRSTTTTRTTSSASAAPAAAQRLVAM. Low complexity predominate over residues 19-32; that stretch reads RSTTTTRTTSSASA. Residues Asn-54 and Lys-56 each coordinate substrate. The active-site Electrophile is His-138. Cysteine derivative is present on Cys-186. The active-site Proton acceptor is the Glu-208.

This sequence belongs to the triosephosphate isomerase family. In terms of assembly, homodimer.

It is found in the plastid. The protein localises to the chloroplast. It carries out the reaction D-glyceraldehyde 3-phosphate = dihydroxyacetone phosphate. It participates in carbohydrate biosynthesis; Calvin cycle. The polypeptide is Triosephosphate isomerase, chloroplastic (Secale cereale (Rye)).